The sequence spans 632 residues: Extracellular metalloproteinase 2 (632 aa).

Residues 1 to 19 (MHGLLLAGLAAALPLGVAG) form the signal peptide. Positions 20–244 (LPARQQSGLS…VHNVVDYVAS (225 aa)) are excised as a propeptide. The N-linked (GlcNAc...) asparagine glycan is linked to Asn270. Zn(2+) is bound at residue His429. The active site involves Glu430. His433 is a binding site for Zn(2+).

The protein belongs to the peptidase M36 family. Zn(2+) serves as cofactor.

It is found in the secreted. Functionally, secreted metalloproteinase probably acting as a virulence factor. The sequence is that of Extracellular metalloproteinase 2 (MEP2) from Trichophyton rubrum (Athlete's foot fungus).